The sequence spans 367 residues: Putrescine-binding periplasmic protein SpuD (367 aa).

A signal peptide spans 1-24 (MMKRFGKTLLALTLAGSVAGMAQA). 36–37 (SD) serves as a coordination point for putrescine. The cysteines at positions 173 and 236 are disulfide-linked. Asp244 and Asp275 together coordinate putrescine.

It belongs to the bacterial solute-binding protein PotD/PotF family.

The protein resides in the periplasm. Its subcellular location is the secreted. In terms of biological role, putrescine-binding protein probably required for putrescine uptake into cells. Binds putrescine with high affinity, spermidine with relatively low affinity. Does not bind cadaverine or spermine. Putrescine binding induces large inter-domain conformational changes. The polypeptide is Putrescine-binding periplasmic protein SpuD (spuD) (Pseudomonas aeruginosa (strain UCBPP-PA14)).